A 686-amino-acid chain; its full sequence is Acyl-CoA synthetase short-chain family member 3, mitochondrial (686 aa).

The N-terminal 29 residues, 1–29 (MKPSWLQCHKVTSAGGLGGPLPGSSPARG), are a transit peptide targeting the mitochondrion. Residue 227–230 (EPGR) participates in CoA binding. ATP contacts are provided by residues 425–427 (GER) and 446–451 (DHWWQT). At Lys518 the chain carries N6-succinyllysine. Lys524 carries the N6-acetyllysine modification. Positions 539, 554, and 565 each coordinate ATP. Position 624 (Arg624) interacts with CoA.

It belongs to the ATP-dependent AMP-binding enzyme family.

Its subcellular location is the mitochondrion matrix. It catalyses the reaction acetate + ATP + CoA = acetyl-CoA + AMP + diphosphate. The catalysed reaction is propanoate + ATP + CoA = propanoyl-CoA + AMP + diphosphate. It carries out the reaction butanoate + ATP + CoA = butanoyl-CoA + AMP + diphosphate. Its function is as follows. Catalyzes the synthesis of acetyl-CoA from short-chain fatty acids. Propionate is the preferred substrate but can also utilize acetate and butyrate with a much lower affinity. This chain is Acyl-CoA synthetase short-chain family member 3, mitochondrial (ACSS3), found in Pongo abelii (Sumatran orangutan).